The following is a 2375-amino-acid chain: Talin-2 (2375 aa).

The FERM domain maps to 88–406 (RPQKIRMLDG…GYIDIILKKK (319 aa)). The tract at residues 312-406 (GVSFFLVKEK…GYIDIILKKK (95 aa)) is interaction with PIP5K1C. 4 positions are modified to phosphoserine: Ser428, Ser450, Ser624, and Ser1024. Residue Tyr1666 is modified to Phosphotyrosine. The 171-residue stretch at 2205–2375 (TEWVDPEDPT…KRLQAAGNAV (171 aa)) folds into the I/LWEQ domain.

Interacts directly with PIP5K1C.

It localises to the cytoplasm. Its subcellular location is the cell junction. The protein localises to the focal adhesion. The protein resides in the synapse. It is found in the cell membrane. It localises to the cytoskeleton. In terms of biological role, as a major component of focal adhesion plaques that links integrin to the actin cytoskeleton, may play an important role in cell adhesion. Recruits PIP5K1C to focal adhesion plaques and strongly activates its kinase activity. This chain is Talin-2 (Tln2), found in Mus musculus (Mouse).